The sequence spans 303 residues: Probable cell division protein WhiA (303 aa).

The segment at residues 272 to 303 (SIQQLADSLSKPLTKSGVNHRLRKINKIADEL) is a DNA-binding region (H-T-H motif).

It belongs to the WhiA family.

Involved in cell division and chromosome segregation. In Streptococcus gordonii (strain Challis / ATCC 35105 / BCRC 15272 / CH1 / DL1 / V288), this protein is Probable cell division protein WhiA.